The primary structure comprises 201 residues: Syndecan-2 (201 aa).

The N-terminal stretch at 1 to 18 (MQRAWILLTLGLMACVSA) is a signal peptide. Over 19–144 (ETRAELTSDK…HSDNLFKRTE (126 aa)) the chain is Extracellular. O-linked (Xyl...) (glycosaminoglycan) serine glycosylation is found at serine 41, serine 55, and serine 57. Disordered stretches follow at residues 42–69 (GLYP…PDLT) and 88–129 (TMTL…KSTD). The span at 90 to 102 (TLKTQSITPTQTE) shows a compositional bias: polar residues. Residues 106 to 123 (ETDKKEFEISEAEEKQDP) are compositionally biased toward basic and acidic residues. Position 115 is a phosphoserine (serine 115). A helical transmembrane segment spans residues 145 to 169 (VLAAVIAGGVIGFLFAIFLILLLVY). Topologically, residues 170–201 (RMRKKDEGSYDLGERKPSSAAYQKAPTKEFYA) are cytoplasmic. The interval 178–201 (SYDLGERKPSSAAYQKAPTKEFYA) is disordered. Serine 187 is modified (phosphoserine).

It belongs to the syndecan proteoglycan family. In terms of assembly, interacts (via cytoplasmic domain) with SARM1. Forms a complex with SDCBP and PDCD6IP. O-glycosylated; contains both heparan sulfate and chondroitin sulfate.

It is found in the membrane. Its function is as follows. Cell surface proteoglycan which regulates dendritic arbor morphogenesis. The protein is Syndecan-2 (Sdc2) of Rattus norvegicus (Rat).